A 513-amino-acid chain; its full sequence is Cytochrome P450 monooxygenase eqxH (513 aa).

Residues 13-32 (QYAILCGITVFTLFIVQLSL) traverse the membrane as a helical segment. 2 N-linked (GlcNAc...) asparagine glycosylation sites follow: asparagine 130 and asparagine 295. Cysteine 449 is a heme binding site.

Belongs to the cytochrome P450 family. Heme serves as cofactor.

It is found in the membrane. The protein operates within mycotoxin biosynthesis. Cytochrome P450 monooxygenase; part of the gene cluster that mediates the biosynthesis of equisetin, a trans-fused decalin-containing tetramic acid with antimicrobial activity. The PKS module of eqxS together with the enoylreductase eqxC catalyze the formation of the polyketide unit which is then conjugated to L-serine by the condensation domain of the eqxS NRPS module. Activity of the Dieckmann cyclase domain (RED) results in release of the Dieckmann product intermediate. Diels-Alderase eqx3 is involved in endo-selective Diels-Alder cycloaddition to form the decalin ring, leading to the production of N-desmethylequisetin also called trichosetin. Subsequent N-methylation is carried out by eqxD to give equisetin. In Fusarium heterosporum, this protein is Cytochrome P450 monooxygenase eqxH.